The sequence spans 169 residues: Protein HIGH ARSENIC CONTENT 1, mitochondrial (169 aa).

A mitochondrion-targeting transit peptide spans 1–59 (MYTYSLLNLSHCRRQTRKKRKTDHTEGFLMEETKPKTVEDVETVDVYTAKGFLSTGHRY). In terms of domain architecture, Rhodanese spans 60–153 (LDVRTNEEFA…WVDAGFAGDK (94 aa)). The active-site Cysteine persulfide intermediate is C113.

As to expression, expressed in root hairs, epidermal cells at the surface of the root and in the pericycle within the stele.

Its subcellular location is the mitochondrion. The catalysed reaction is [glutaredoxin]-dithiol + arsenate + glutathione + H(+) = glutathionyl-S-S-[glutaredoxin] + arsenite + H2O. With respect to regulation, inhibited by trobenzenesulphonic acid (TNBS). Its function is as follows. Arsenate reductase critical for arsenic tolerance. Reduces arsenate to arsenite in the root, facilitating efflux of arsenic back into the soil to limit both its accumulation in the root and transport to the shoot. Essential for arsenite efflux from the root, but not necessary for arsenate uptake. This chain is Protein HIGH ARSENIC CONTENT 1, mitochondrial, found in Arabidopsis thaliana (Mouse-ear cress).